Here is a 220-residue protein sequence, read N- to C-terminus: Heptaprenyl diphosphate synthase component 1 (220 aa).

Heterodimer of component I and II.

The enzyme catalyses 4 isopentenyl diphosphate + (2E,6E)-farnesyl diphosphate = all-trans-heptaprenyl diphosphate + 4 diphosphate. Functionally, supplies heptaprenyl diphosphate, the precursor for the side chain of the isoprenoid quinone menaquinone-7 (MQ-7). This chain is Heptaprenyl diphosphate synthase component 1 (hepS), found in Geobacillus stearothermophilus (Bacillus stearothermophilus).